A 212-amino-acid polypeptide reads, in one-letter code: Ribosomal RNA small subunit methyltransferase G (212 aa).

S-adenosyl-L-methionine is bound by residues glycine 80, leucine 85, 131–132, and arginine 146; that span reads AE.

The protein belongs to the methyltransferase superfamily. RNA methyltransferase RsmG family.

Its subcellular location is the cytoplasm. It carries out the reaction guanosine(527) in 16S rRNA + S-adenosyl-L-methionine = N(7)-methylguanosine(527) in 16S rRNA + S-adenosyl-L-homocysteine. Functionally, specifically methylates the N7 position of guanine in position 527 of 16S rRNA. The protein is Ribosomal RNA small subunit methyltransferase G of Stenotrophomonas maltophilia (strain K279a).